The following is a 162-amino-acid chain: Globin CTT-VIIB-7 (162 aa).

The signal sequence occupies residues 1 to 16 (MKFFAVLALCVVGAIA). The region spanning 18–162 (PLSADEANLV…TYAVALKSLE (145 aa)) is the Globin domain. Residues histidine 76 and histidine 111 each contribute to the heme b site.

Belongs to the globin family. In terms of assembly, homodimer.

The sequence is that of Globin CTT-VIIB-7 (CTT-7B7) from Chironomus thummi piger (Midge).